A 373-amino-acid chain; its full sequence is Dual-specificity RNA methyltransferase RlmN (373 aa).

Glu94 (proton acceptor) is an active-site residue. The Radical SAM core domain maps to 100–339 (EDDRATLCVS…VIVRKTRGDD (240 aa)). A disulfide bridge links Cys107 with Cys344. [4Fe-4S] cluster is bound by residues Cys114, Cys118, and Cys121. S-adenosyl-L-methionine is bound by residues 168-169 (GE), Ser200, 222-224 (SIH), and Asn301. The active-site S-methylcysteine intermediate is Cys344.

It belongs to the radical SAM superfamily. RlmN family. [4Fe-4S] cluster serves as cofactor.

Its subcellular location is the cytoplasm. The enzyme catalyses adenosine(2503) in 23S rRNA + 2 reduced [2Fe-2S]-[ferredoxin] + 2 S-adenosyl-L-methionine = 2-methyladenosine(2503) in 23S rRNA + 5'-deoxyadenosine + L-methionine + 2 oxidized [2Fe-2S]-[ferredoxin] + S-adenosyl-L-homocysteine. It catalyses the reaction adenosine(37) in tRNA + 2 reduced [2Fe-2S]-[ferredoxin] + 2 S-adenosyl-L-methionine = 2-methyladenosine(37) in tRNA + 5'-deoxyadenosine + L-methionine + 2 oxidized [2Fe-2S]-[ferredoxin] + S-adenosyl-L-homocysteine. Specifically methylates position 2 of adenine 2503 in 23S rRNA and position 2 of adenine 37 in tRNAs. m2A2503 modification seems to play a crucial role in the proofreading step occurring at the peptidyl transferase center and thus would serve to optimize ribosomal fidelity. This is Dual-specificity RNA methyltransferase RlmN from Shewanella sp. (strain W3-18-1).